The primary structure comprises 177 residues: Large ribosomal subunit protein uL16 (177 aa).

This sequence belongs to the universal ribosomal protein uL16 family. As to quaternary structure, part of the 50S ribosomal subunit. Weakly binds 5S rRNA. Probably binds the A and P site tRNAs.

In terms of biological role, this is 1 of 5 proteins that mediate the attachment of the 5S rRNA onto the large ribosomal subunit, stabilizing the orientation of adjacent RNA domains. Modeling places the A and P site tRNAs in close proximity to this protein. This Haloarcula marismortui (strain ATCC 43049 / DSM 3752 / JCM 8966 / VKM B-1809) (Halobacterium marismortui) protein is Large ribosomal subunit protein uL16.